A 476-amino-acid polypeptide reads, in one-letter code: Aspartyl/glutamyl-tRNA(Asn/Gln) amidotransferase subunit B (476 aa).

Belongs to the GatB/GatE family. GatB subfamily. As to quaternary structure, heterotrimer of A, B and C subunits.

It carries out the reaction L-glutamyl-tRNA(Gln) + L-glutamine + ATP + H2O = L-glutaminyl-tRNA(Gln) + L-glutamate + ADP + phosphate + H(+). The enzyme catalyses L-aspartyl-tRNA(Asn) + L-glutamine + ATP + H2O = L-asparaginyl-tRNA(Asn) + L-glutamate + ADP + phosphate + 2 H(+). Allows the formation of correctly charged Asn-tRNA(Asn) or Gln-tRNA(Gln) through the transamidation of misacylated Asp-tRNA(Asn) or Glu-tRNA(Gln) in organisms which lack either or both of asparaginyl-tRNA or glutaminyl-tRNA synthetases. The reaction takes place in the presence of glutamine and ATP through an activated phospho-Asp-tRNA(Asn) or phospho-Glu-tRNA(Gln). This is Aspartyl/glutamyl-tRNA(Asn/Gln) amidotransferase subunit B from Lactobacillus helveticus (strain DPC 4571).